Reading from the N-terminus, the 349-residue chain is DNA-directed RNA polymerase subunit alpha (349 aa).

The alpha N-terminal domain (alpha-NTD) stretch occupies residues 1-226 (MLIAQRPTLI…GLFGLAQELN (226 aa)). The segment at 241 to 349 (AALAADLALP…GAEFIETEQY (109 aa)) is alpha C-terminal domain (alpha-CTD). Positions 309–349 (KDSPPGFDPRQAVDTYGTDAYSPSFSDPSDDGAEFIETEQY) are disordered. Residues 336-349 (PSDDGAEFIETEQY) show a composition bias toward acidic residues.

Belongs to the RNA polymerase alpha chain family. In terms of assembly, homodimer. The RNAP catalytic core consists of 2 alpha, 1 beta, 1 beta' and 1 omega subunit. When a sigma factor is associated with the core the holoenzyme is formed, which can initiate transcription.

The enzyme catalyses RNA(n) + a ribonucleoside 5'-triphosphate = RNA(n+1) + diphosphate. Functionally, DNA-dependent RNA polymerase catalyzes the transcription of DNA into RNA using the four ribonucleoside triphosphates as substrates. The polypeptide is DNA-directed RNA polymerase subunit alpha (Frankia casuarinae (strain DSM 45818 / CECT 9043 / HFP020203 / CcI3)).